A 552-amino-acid chain; its full sequence is Probable inorganic phosphate transporter 1-10 (552 aa).

At 1–22 (MAPIGVLTALDQARTQYYHFKA) the chain is on the cytoplasmic side. A helical membrane pass occupies residues 23–43 (IVIAGMGLFTDSYDLFCIAPV). Topologically, residues 44-68 (MKIVGRVYYSDGGARPGVTPPAVVS) are extracellular. The helical transmembrane segment at 69–89 (ATVGVALLGAVIGNVVFGALG) threads the bilayer. Residues 90-96 (DRVGRRR) are Cytoplasmic-facing. The helical transmembrane segment at 97–117 (VYGACLLLMVCSSVGSGFSVC) threads the bilayer. The Extracellular portion of the chain corresponds to 118–123 (RTRRCA). Residues 124-144 (LASLCFFRFLLGVGVGGDYPL) form a helical membrane-spanning segment. Residues 145–158 (SATIMSEFANRRTR) lie on the Cytoplasmic side of the membrane. Residues 159 to 179 (GAFIAAVFSMQGFGILASSAV) form a helical membrane-spanning segment. Over 180–203 (TMAVAAAFDHYTGYPAPLDTPECA) the chain is Extracellular. A helical membrane pass occupies residues 204-224 (DLAWRIILMAGAVPAALTYYW). Topologically, residues 225-295 (RMSMPETARY…RRFVRQHGRD (71 aa)) are cytoplasmic. Residues 296 to 316 (LFACAAAWFLLDIPYYSSTLF) traverse the membrane as a helical segment. Topologically, residues 317-342 (QSQIYRPLFPAPGLINAFQEAFNVAK) are extracellular. Residues 343 to 363 (FQAVIAVASTIPGYFVAVLLI) form a helical membrane-spanning segment. Residues 364-369 (DRVGRR) are Cytoplasmic-facing. Residues 370–390 (CLQMAGFLLMAVFLFALAGPY) form a helical membrane-spanning segment. Over 391–397 (DGYWRDH) the chain is Extracellular. The chain crosses the membrane as a helical span at residues 398–418 (GAHAGYIVLYSLTFFSANLGP). The Cytoplasmic segment spans residues 419–439 (NTTTFILPAELFPARFRSTCH). A helical membrane pass occupies residues 440–460 (GLSGAAGKLGALVGSIGFLWA). Residues 461–473 (SQQKDGAAAGHLP) are Extracellular-facing. The helical transmembrane segment at 474–494 (GIGMMYALFVLGGICLLGLAL) threads the bilayer. The Cytoplasmic portion of the chain corresponds to 495-552 (TYVFTPETMMRSLEENESDRAQTQVGDGGSDTEAAKSPASMASSHLSMSPILPARVSV). Residues 507 to 540 (LEENESDRAQTQVGDGGSDTEAAKSPASMASSHL) form a disordered region.

This sequence belongs to the major facilitator superfamily. Phosphate:H(+) symporter (TC 2.A.1.9) family. Expressed at low levels in roots.

The protein resides in the membrane. High-affinity transporter for external inorganic phosphate. The chain is Probable inorganic phosphate transporter 1-10 (PHT1-10) from Oryza sativa subsp. japonica (Rice).